A 148-amino-acid chain; its full sequence is 3-dehydroquinate dehydratase (148 aa).

The Proton acceptor role is filled by tyrosine 23. The substrate site is built by asparagine 74, histidine 80, and aspartate 87. Histidine 100 functions as the Proton donor in the catalytic mechanism. Residues isoleucine 101 to serine 102 and arginine 111 contribute to the substrate site.

The protein belongs to the type-II 3-dehydroquinase family. Homododecamer.

It catalyses the reaction 3-dehydroquinate = 3-dehydroshikimate + H2O. It functions in the pathway metabolic intermediate biosynthesis; chorismate biosynthesis; chorismate from D-erythrose 4-phosphate and phosphoenolpyruvate: step 3/7. In terms of biological role, catalyzes a trans-dehydration via an enolate intermediate. The sequence is that of 3-dehydroquinate dehydratase from Anoxybacillus flavithermus (strain DSM 21510 / WK1).